We begin with the raw amino-acid sequence, 458 residues long: MALWGGRFTQAADQRFKQFNDSLRFDYRLAEQDIVGSVAWSKALVTVGVLTADEQRQLEEALNVLLEEVRANPQQILQSDAEDIHSWVEGRLIDKVGQLGKKLHTGRSRNDQVATDLKLWCKETVRELLTANRQLQSALVETAQANQDAIMPGYTHLQRAQPVTFAHWCLAYVEMLARDESRLQDTLKRLDVSPLGCGALAGTAYEIDREQLAGWLGFASATRNSLDSVSDRDHVLELLSDAAIGMVHLSRFAEDLIFFNSGEAGFVELSDRVTSGSSLMPQKKNPDALELIRGKCGRVQGALTGMMMTLKGLPLAYNKDMQEDKEGLFDALDTWLDCLHMAALVLDGIQVKRPRCQDAAQQGYANATELADYLVAKGVPFREAHHIVGEAVVEAIRQGKPLEALPLADLQKFSRVIGDDVYPILSLQSCLDKRAAKGGVSPQQVAQAIDDAKARLAL.

This sequence belongs to the lyase 1 family. Argininosuccinate lyase subfamily.

Its subcellular location is the cytoplasm. It catalyses the reaction 2-(N(omega)-L-arginino)succinate = fumarate + L-arginine. Its pathway is amino-acid biosynthesis; L-arginine biosynthesis; L-arginine from L-ornithine and carbamoyl phosphate: step 3/3. The polypeptide is Argininosuccinate lyase (Salmonella agona (strain SL483)).